Consider the following 554-residue polypeptide: Potassium-transporting ATPase potassium-binding subunit (554 aa).

12 consecutive transmembrane segments (helical) span residues 1–21, 59–79, 131–151, 174–194, 246–266, 279–299, 323–343, 352–372, 375–395, 412–432, 481–501, and 525–545; these read MSSQVAGLLQLTALIAALALA, WPAYLRGVLAFSAMSVLFLYL, GLAVQNFLSAAVGMAVAVALV, VRILVPISVIGAIVLVAAGAI, PNPLSNLFEVFLILLIPFALT, GYAILGAMAVIWIGFTALMMW, FGIAGSSIFAVATTLTSTGAV, GFGGGITLLGMQLGEIAPGGV, GLYGMLIMAIIAVFIAGLMVG, FAACYILITPALVLGFTAVAM, IGIAMLLGRFLPMVFVLALAG, and GLLVGTILIITGLTYFPALAL.

The protein belongs to the KdpA family. As to quaternary structure, the system is composed of three essential subunits: KdpA, KdpB and KdpC.

The protein localises to the cell membrane. In terms of biological role, part of the high-affinity ATP-driven potassium transport (or Kdp) system, which catalyzes the hydrolysis of ATP coupled with the electrogenic transport of potassium into the cytoplasm. This subunit binds the extracellular potassium ions and delivers the ions to the membrane domain of KdpB through an intramembrane tunnel. This chain is Potassium-transporting ATPase potassium-binding subunit, found in Streptomyces griseus subsp. griseus (strain JCM 4626 / CBS 651.72 / NBRC 13350 / KCC S-0626 / ISP 5235).